The primary structure comprises 158 residues: Transcription elongation factor GreA (158 aa).

Residues 14-76 (LDQLKDELTH…EIESILKNVK (63 aa)) adopt a coiled-coil conformation.

It belongs to the GreA/GreB family.

In terms of biological role, necessary for efficient RNA polymerase transcription elongation past template-encoded arresting sites. The arresting sites in DNA have the property of trapping a certain fraction of elongating RNA polymerases that pass through, resulting in locked ternary complexes. Cleavage of the nascent transcript by cleavage factors such as GreA or GreB allows the resumption of elongation from the new 3'terminus. GreA releases sequences of 2 to 3 nucleotides. This is Transcription elongation factor GreA from Acholeplasma laidlawii (strain PG-8A).